The following is a 552-amino-acid chain: MGFDVLLDQAGSLGRFQILQIAFFFVTSMITYTHILLENFTAAIPGHRCWVPLLDNHTTSGNDSDILSQDALLRVSIPLDSNLRPEKCRRFIHPQWQLLYLNGTSPSTNEPDTEPCVDGWVYDQSSFSSTIVTKWDLVCEFQSLKSVVQTLFMSGSLLGGLMFGRLSDRYGRKAIYTWCLLQTAIADTCAIFAPTFVVFCIFRFLAGLTTINIMTNAFILATEWTVPKLQYIGITLILCSYSIGQMLLGGLAFAIRDWYTLHLTVSIPLFVLSLLSRRLVESARWLVTTNQLDEGTKALRRVARINGKKSAGEILTIEFVRSAMQEELNKAQTKTSVIHLLRAPKLRMIICFLSFIRLGASVPFMGLILNLQDLGSSIFLFQVLFGAITFISRCSAHLIMKHMDRRINQSLFFFLVGLCILVNTFLSQEMQTLRVVLATLGIGTVSAANATFFVHALELTPTTFRSTTAGINNVFSRMGSVLAPLLMTLVVYSPHLPWVMYGVFPILAGLIVFCLPETRNRPLPNTIQDVENDTKESRKVKEEDTFIKVTQF.

The next 12 helical transmembrane spans lie at 16–36 (FQILQIAFFFVTSMITYTHIL), 144–164 (LKSVVQTLFMSGSLLGGLMFG), 175–197 (IYTWCLLQTAIADTCAIFAPTFV), 201–220 (IFRFLAGLTTINIMTNAFIL), 232–252 (IGITLILCSYSIGQMLLGGLA), 255–275 (IRDWYTLHLTVSIPLFVLSLL), 349–369 (IICFLSFIRLGASVPFMGLIL), 371–391 (LQDLGSSIFLFQVLFGAITFI), 407–427 (INQSLFFFLVGLCILVNTFLS), 435–455 (VVLATLGIGTVSAANATFFVH), 474–494 (VFSRMGSVLAPLLMTLVVYSP), and 496–516 (LPWVMYGVFPILAGLIVFCLP).

It belongs to the major facilitator (TC 2.A.1) superfamily. Organic cation transporter (TC 2.A.1.19) family.

Its subcellular location is the cell membrane. The catalysed reaction is estrone 3-sulfate(out) + glutarate(in) = estrone 3-sulfate(in) + glutarate(out). The enzyme catalyses 17beta-estradiol 17-O-(beta-D-glucuronate)(out) + glutarate(in) = 17beta-estradiol 17-O-(beta-D-glucuronate)(in) + glutarate(out). It carries out the reaction taurocholate(out) + glutarate(in) = taurocholate(in) + glutarate(out). It catalyses the reaction 5alpha-androstane-3alpha,17beta-diol 3-O-(beta-D-glucuronate)(out) + glutarate(in) = 5alpha-androstane-3alpha,17beta-diol 3-O-(beta-D-glucuronate)(in) + glutarate(out). The catalysed reaction is glycocholate(out) + glutarate(in) = glycocholate(in) + glutarate(out). The enzyme catalyses dehydroepiandrosterone 3-sulfate(out) + glutarate(in) = dehydroepiandrosterone 3-sulfate(in) + glutarate(out). It carries out the reaction glutarate(in) + succinate(out) = glutarate(out) + succinate(in). Its function is as follows. Renal transmembrane organic anion/dicarboxylate exchanger that participates in the reabsorption of conjugated steroids, as well as bile acids, driven by an outward gradient of dicarboxylates such as glutarate or succinate. Transports androstanediol glucuronide (5alpha-androstane-3alpha,17beta-diol 3-O-(beta-D-glucuronate)), estrone 3-sulfate, and estradiol-17-glucuronide (17beta-estradiol 17-O-(beta-D-glucuronate)), and taurocholate. The sequence is that of Steroid transmembrane transporter SLC22A24 from Oryctolagus cuniculus (Rabbit).